The sequence spans 298 residues: Rhodomycin D methylesterase DauP (298 aa).

An AB hydrolase-1 domain is found at 25-277 (PLLLIAGGNL…VEIENMGHAL (253 aa)).

It belongs to the methyl esterase DnrP family.

It catalyses the reaction rhodomycin D + H2O = 10-carboxy-13-deoxycarminomycin + methanol + H(+). The enzyme catalyses 4-O-methylrhodomycin D + H2O = 10-carboxy-13-deoxydaunorubicin + methanol + H(+). It functions in the pathway antibiotic biosynthesis; daunorubicin biosynthesis. Its pathway is antibiotic biosynthesis; carminomycin biosynthesis. Functionally, involved in the biosynthesis of the anthracyclines carminomycin and daunorubicin (daunomycin) which are aromatic polyketide antibiotics that exhibit high cytotoxicity and are widely applied in the chemotherapy of a variety of cancers. Catalyzes the removal of methyl group from the carbomethoxy group of rhodomycin D (10-carbomethoxy-13-deoxycarminomycin) and 4-O-methylrhodomycin D to yield 10-carboxy-13-deoxycarminomycin and 10-carboxy-13-deoxydaunorubicin, respectively. Could be also involved in the decarboxylation of 10-carboxy-13-deoxycarminomycin and 10-carboxy-13-deoxydaunorubicin to yield 13-deoxycarminomycin and 13-deoxydaunorubicin, respectively. It seems that DauK may influence the ability of DauP to carry out the decarboxylation. The chain is Rhodomycin D methylesterase DauP (dauP) from Streptomyces sp. (strain C5).